The primary structure comprises 350 residues: 3-dehydroquinate synthase (350 aa).

NAD(+) is bound by residues 106-110, 130-131, lysine 143, and lysine 152; these read GVIGD and TS. Residues glutamate 185, histidine 246, and histidine 263 each contribute to the Zn(2+) site.

It belongs to the sugar phosphate cyclases superfamily. Dehydroquinate synthase family. Requires Co(2+) as cofactor. Zn(2+) is required as a cofactor. It depends on NAD(+) as a cofactor.

The protein resides in the cytoplasm. The enzyme catalyses 7-phospho-2-dehydro-3-deoxy-D-arabino-heptonate = 3-dehydroquinate + phosphate. Its pathway is metabolic intermediate biosynthesis; chorismate biosynthesis; chorismate from D-erythrose 4-phosphate and phosphoenolpyruvate: step 2/7. In terms of biological role, catalyzes the conversion of 3-deoxy-D-arabino-heptulosonate 7-phosphate (DAHP) to dehydroquinate (DHQ). This chain is 3-dehydroquinate synthase, found in Clostridium beijerinckii (strain ATCC 51743 / NCIMB 8052) (Clostridium acetobutylicum).